We begin with the raw amino-acid sequence, 152 residues long: Ribosome maturation factor RimP (152 aa).

This sequence belongs to the RimP family.

Its subcellular location is the cytoplasm. Its function is as follows. Required for maturation of 30S ribosomal subunits. This is Ribosome maturation factor RimP from Pseudomonas putida (strain GB-1).